The sequence spans 209 residues: uncharacterized protein (209 aa).

The 67-residue stretch at 1-67 folds into the MPN domain; it reads MEILPKYKPE…LIMYNYWTID (67 aa). Residues H17, H19, and D30 each contribute to the Zn(2+) site. The JAMM motif motif lies at 17–30; sequence HTHPKGPAEPSIND.

This is an uncharacterized protein from Acidianus convivator (ATV).